Here is a 1261-residue protein sequence, read N- to C-terminus: MGHSRRPVGGEKKSRGFGRSKVADVGDGRQAGKPQVKKATFETTKKKDIGVSDLTLLSKISNEAINDNLKLRFEHDEIYTYIGHVLVSVNPFRDLGIYTDNVLDSYRGKNRLEVPPHVFAVAESSYYNMKSYKDNQCVIISGESGAGKTEAAKRIMQYIASVSGGSDSSIQQTKDMVLATNPLLESFGNAKTLRNNNSSRFGKYLELEFNANGEPVGANITNYLLEKSRVVGQIANERNFHIFYQFTKAAPQKYRDMFGVQQPQSYLYTSRSKCFDVPGVDDNAEFRDTLNAMGVIGMSEAEQDNVFRMLAAILWIGNVQFAEDDSGNAAISDQSVVDFVAYLLEVDPAQVNKALTIRIMETARGGRRGSVYEVPLNTVQALAVRDALSKAIYFNLFDWIVERVNQSLTAREPVANSIGILDIYGFEIFEKNSFEQLCINYVNEKLQQIFIQLTLKAEQDEYAREQIQWTPIKYFDNKVVCSLIEDKRPPGVFAALNDACATAHADSGAADNTFVGRLNFLGQNPNFENRQGQFIVKHYAGDVSYSVEGMTDKNKDQLLKDLLNLVGSSGNQFVHTLFPNQVNQDDKRRPPTASDKIKASANDLVATLMKAQPSYIRTIKPNDNKAPREYNVGNVLHQIKYLGLQENVRIRRAGFAYRQTFNKFVERFYLLSPKTSYAGDYTWTGDAESGARQILKDTSIPAEEYQMGITKVFVKTPETLFALEAMRDRYWHNMAIRIQRAWRNYLRYRIECAIRIQRFWRRTTGGLELLKVRDQGHQVLQGRKERRRMSLLGSRRFLGDYLGIGNKGGPGEMIRNGAGISGSDDILFSCRGEVLISKFGRSSKPSPRILVLTNRHVYIVAQILVNNQLQISAERTVPIGAIKAVSTSNLKDDWFSLIIGGQEPDPLINCVFKTEFFTHLQTALRGQLNLKVSENIEYNKKPGKLATVKAIKDPAASPNVDTYKSHTIHTSPGEPPSSVSKPTPKAKQVAARPVTKGKLLRPGGPGGGPSKLASRPASRPTPKPQPLPQSQPATAQPIPAPQPAAVPRPVPQPVAAAAASHTRNASSGSVRAPPPPPPASPPAPKKATAKALYDFTSAQSNELDIRAGDVVQIVSKEGNGWWLCMNMATSVQGWTPQAYLEEQVAPTPKPAPPPPPPAAPRASPVPSANGAAATAAAAKAKPAPPAPPAKRPNMAGRKAVPAPPPAPRDSAVSMNSQDSSGGSGRGTPNSTSNASLAGGLAEALRARQHAMQGKHDDDDEW.

Positions 1 to 39 (MGHSRRPVGGEKKSRGFGRSKVADVGDGRQAGKPQVKKA) are disordered. One can recognise a Myosin motor domain in the interval 49 to 728 (IGVSDLTLLS…TLFALEAMRD (680 aa)). 142–149 (GESGAGKT) is a binding site for ATP. At serine 370 the chain carries Phosphoserine. The tract at residues 417 to 499 (SIGILDIYGF…PGVFAALNDA (83 aa)) is actin-binding. IQ domains lie at 732–752 (HNMA…RIEC) and 753–778 (AIRI…QGHQ). One can recognise a TH1 domain in the interval 786 to 973 (RRRMSLLGSR…KSHTIHTSPG (188 aa)). Disordered stretches follow at residues 956 to 1093 (ASPN…KALY) and 1139 to 1261 (YLEE…DDEW). 4 stretches are compositionally biased toward pro residues: residues 1019–1029 (RPTPKPQPLPQ), 1038–1052 (IPAP…PVPQ), 1072–1084 (APPP…PPAP), and 1147–1159 (TPKP…PPAA). The SH3 domain occupies 1084 to 1145 (PKKATAKALY…PQAYLEEQVA (62 aa)). Low complexity predominate over residues 1160–1181 (PRASPVPSANGAAATAAAAKAK). Over residues 1212-1233 (VSMNSQDSSGGSGRGTPNSTSN) the composition is skewed to polar residues. The segment covering 1234 to 1243 (ASLAGGLAEA) has biased composition (low complexity).

It belongs to the TRAFAC class myosin-kinesin ATPase superfamily. Myosin family. In terms of processing, phosphorylation of the TEDS site (Ser-370) is required for the polarization of the actin cytoskeleton. Phosphorylation probably activates the myosin-I ATPase activity.

The protein localises to the cytoplasm. The protein resides in the cytoskeleton. Its subcellular location is the actin patch. Type-I myosin implicated in the organization of the actin cytoskeleton. Required for proper actin cytoskeleton polarization. At the cell cortex, assembles in patch-like structures together with proteins from the actin-polymerizing machinery and promotes actin assembly. Functions as actin nucleation-promoting factor (NPF) for the Arp2/3 complex. Plays an important role in polarized growth, spore germination, hyphal morphogenesis, and septal wall formation. This is Myosin-1 (myoA) from Aspergillus oryzae (strain ATCC 42149 / RIB 40) (Yellow koji mold).